We begin with the raw amino-acid sequence, 322 residues long: MTDAAGGRQEIWVEKYRPERLEDVVGHPDITERLQSYVDRDDLPHLLFAGPAGTGKTASSVSIAKELYGDDWQDNFLELNASDERGIDVVRDRIKDFARSSFGGHNYRVIFLDEADALTDDAQSALRRTMEQFSNNTRFILSCNYSSKIIDPIQSRCAVFRFAQLGDDAVAAHLREIAETEGLEHTDDGIDALVYAADGDMRRAINALQAASATGDSVNEETVYAITATARPEEIETMVTEALGGDFAAARATLDDLLTNRGLAGGDIIDQVHRSVWEFDVEEAAAVRLLDRLGEADYRIAEGANERVQLEALLASVALNAE.

50–57 (GPAGTGKT) contributes to the ATP binding site.

This sequence belongs to the activator 1 small subunits family. RfcS subfamily. Heteromultimer composed of small subunits (RfcS) and large subunits (RfcL).

In terms of biological role, part of the RFC clamp loader complex which loads the PCNA sliding clamp onto DNA. The sequence is that of Replication factor C small subunit from Halobacterium salinarum (strain ATCC 700922 / JCM 11081 / NRC-1) (Halobacterium halobium).